Consider the following 1663-residue polypeptide: TPR repeat-containing protein DDB_G0287407 (1663 aa).

Disordered regions lie at residues 84–109 and 326–359; these read RKTQ…QKGQ and SEYS…NSNQ. Low complexity predominate over residues 89–105; it reads TSSNGSTSTTTTTTTTT. Acidic residues predominate over residues 333 to 352; the sequence is DDGENDQSDDDDDNEDDDDF. TPR repeat units follow at residues 1110-1143, 1150-1183, 1192-1225, 1234-1269, 1278-1311, and 1320-1353; these read SDVW…YINN, AKVD…YTKE, AITL…CESK, ADIA…TESK, ARIL…YEAR, and SQIL…TKKI. Disordered stretches follow at residues 1500–1528 and 1544–1571; these read VAQP…QQQR and QKVS…RQNT. Residues 1516-1547 are a coiled coil; that stretch reads RTQQAIQQGQQQRQQVQQQQQQVQQQMSQKVS. Low complexity-rich tracts occupy residues 1518–1528 and 1544–1563; these read QQAIQQGQQQR and QKVS…QPSQ.

This Dictyostelium discoideum (Social amoeba) protein is TPR repeat-containing protein DDB_G0287407.